A 288-amino-acid polypeptide reads, in one-letter code: Acetyl-coenzyme A carboxylase carboxyl transferase subunit beta (288 aa).

Residues 30-288 (IMTKCPKCKK…KMHQEVKTNA (259 aa)) form the CoA carboxyltransferase N-terminal domain. Zn(2+) is bound by residues cysteine 34, cysteine 37, cysteine 53, and cysteine 56. The segment at 34–56 (CPKCKKIMYTKELAENLNVCFNC) adopts a C4-type zinc-finger fold.

This sequence belongs to the AccD/PCCB family. As to quaternary structure, acetyl-CoA carboxylase is a heterohexamer composed of biotin carboxyl carrier protein (AccB), biotin carboxylase (AccC) and two subunits each of ACCase subunit alpha (AccA) and ACCase subunit beta (AccD). The cofactor is Zn(2+).

It localises to the cytoplasm. The enzyme catalyses N(6)-carboxybiotinyl-L-lysyl-[protein] + acetyl-CoA = N(6)-biotinyl-L-lysyl-[protein] + malonyl-CoA. The protein operates within lipid metabolism; malonyl-CoA biosynthesis; malonyl-CoA from acetyl-CoA: step 1/1. Component of the acetyl coenzyme A carboxylase (ACC) complex. Biotin carboxylase (BC) catalyzes the carboxylation of biotin on its carrier protein (BCCP) and then the CO(2) group is transferred by the transcarboxylase to acetyl-CoA to form malonyl-CoA. The polypeptide is Acetyl-coenzyme A carboxylase carboxyl transferase subunit beta (Staphylococcus saprophyticus subsp. saprophyticus (strain ATCC 15305 / DSM 20229 / NCIMB 8711 / NCTC 7292 / S-41)).